Here is a 373-residue protein sequence, read N- to C-terminus: MPAWSCLVTGAGGFLGQRIIRMLAQEKELQEVRTLFRSFTPKHREELSKLQTKTKVTVLEGDILDAQCLRRACQGISVVIHTAAAIDVFGAIPRQTVIDINLKGTQHLLDACIGARVPVFIYSSSVAVAGPNSYKVIIQNGSEEENHESTWSDPYAYSKKMAEKAVLAANGSTLKDGGTLHTCALRLPFIYGEKSKFISDTMDRALKNNGLINGFSRFSVISSVYVNNAAWAHVLAARGLQDPKKSPNIQGQFYYISDDTPHQSYDDLCYTLSKDWGLRPDSSWKPPVALLYWFGFLLETVSFLLRPVYNYQPPFNRHLVTLLNSVFTFSYKKAQRDLGYEPLVSWEEAREKTSEWIGSLVEQHKGTLNIKAQ.

NADP(+) is bound by residues 10–15 (GAGGFL), Y155, and K159. K159 (proton donor) is an active-site residue. Residues 288 to 308 (VALLYWFGFLLETVSFLLRPV) traverse the membrane as a helical segment.

The protein belongs to the 3-beta-HSD family. In terms of tissue distribution, high levels in adrenal gland, kidney and male liver (at protein level). Low levels in female liver (at protein level). Expressed in ovaries (at protein level).

The protein resides in the endoplasmic reticulum membrane. The protein localises to the mitochondrion membrane. The enzyme catalyses a 3beta-hydroxysteroid + NADP(+) = a 3-oxosteroid + NADPH + H(+). It carries out the reaction 5alpha-androstane-3beta,17beta-diol + NADP(+) = 17beta-hydroxy-5alpha-androstan-3-one + NADPH + H(+). The protein operates within steroid metabolism. Responsible for the reduction of the oxo group on the C-3 of 5alpha-androstane steroids. Catalyzes the conversion of dihydrotestosterone to its inactive form 5alpha-androstanediol, that does not bind androgen receptor/AR. Does not function as an isomerase. The chain is NADPH-dependent 3-keto-steroid reductase HSD3B3 (HSD3B3) from Mesocricetus auratus (Golden hamster).